The primary structure comprises 28 residues: Ranatuerin-2LTa (28 aa).

Cys23 and Cys28 are disulfide-bonded.

As to expression, expressed by the skin glands.

It is found in the secreted. Its function is as follows. Has antibacterial activity. This Rana latastei (Italian agile frog) protein is Ranatuerin-2LTa.